The chain runs to 145 residues: 3-hydroxyacyl-[acyl-carrier-protein] dehydratase FabZ (145 aa).

The active site involves His-47.

This sequence belongs to the thioester dehydratase family. FabZ subfamily.

It is found in the cytoplasm. It catalyses the reaction a (3R)-hydroxyacyl-[ACP] = a (2E)-enoyl-[ACP] + H2O. Its function is as follows. Involved in unsaturated fatty acids biosynthesis. Catalyzes the dehydration of short chain beta-hydroxyacyl-ACPs and long chain saturated and unsaturated beta-hydroxyacyl-ACPs. This Polaromonas naphthalenivorans (strain CJ2) protein is 3-hydroxyacyl-[acyl-carrier-protein] dehydratase FabZ.